The sequence spans 242 residues: ATP synthase subunit a (242 aa).

The next 6 membrane-spanning stretches (helical) occupy residues 29-49 (SSIYMLLASILALTYFYLAFY), 84-104 (FIPLVFSLFIFILFCNLLGMT), 114-134 (IIVTFTLAILVFLMVTIVGFV), 140-160 (FLTLFLPHGTPLWLAPLMIVI), 181-201 (MAGHVLLKVIAGFTVSLMIYL), and 203-223 (FLPIPIMVILIGFEIFVAILQ).

It belongs to the ATPase A chain family. As to quaternary structure, F-type ATPases have 2 components, CF(1) - the catalytic core - and CF(0) - the membrane proton channel. CF(1) has five subunits: alpha(3), beta(3), gamma(1), delta(1), epsilon(1). CF(0) has three main subunits: a(1), b(2) and c(9-12). The alpha and beta chains form an alternating ring which encloses part of the gamma chain. CF(1) is attached to CF(0) by a central stalk formed by the gamma and epsilon chains, while a peripheral stalk is formed by the delta and b chains.

It localises to the cell inner membrane. In terms of biological role, key component of the proton channel; it plays a direct role in the translocation of protons across the membrane. This is ATP synthase subunit a from Rickettsia conorii (strain ATCC VR-613 / Malish 7).